The sequence spans 346 residues: 3-keto-steroid reductase (346 aa).

Positions 16, 39, and 45 each coordinate NADP(+). Residues Ser-178 and Tyr-201 each act as proton donor in the active site. Positions 201, 205, and 236 each coordinate NADP(+). Lys-205 serves as the catalytic Lowers pKa of active site Tyr.

The protein belongs to the short-chain dehydrogenases/reductases (SDR) family. ERG27 subfamily.

The catalysed reaction is a 3beta-hydroxysteroid + NADP(+) = a 3-oxosteroid + NADPH + H(+). It functions in the pathway steroid biosynthesis; zymosterol biosynthesis; zymosterol from lanosterol: step 5/6. In terms of biological role, responsible for the reduction of the keto group on the C-3 of sterols. In Kluyveromyces lactis (strain ATCC 8585 / CBS 2359 / DSM 70799 / NBRC 1267 / NRRL Y-1140 / WM37) (Yeast), this protein is 3-keto-steroid reductase (ERG27).